Consider the following 525-residue polypeptide: MALRRLLLPPLLLSLLLSLASLHLPPGADAARGRSGNRTLNAGAVGGRRAGGALARGGRELNSTARASGVPEAGSRRGQSAAAAAAAAAAASATVTYETCWGYYDVSGQYDKEFECNNSESGYLYCCGTCYYRFCCKKRHEKLDQRQCTNYQSPVWVQTPSTKVVSPGPENKYDPEKDKTNFTVYITCGVIAFVIVAGVFAKVSYDKAHRPPREMNIHRALADILRQQGPIPIAHCERETISAIDTSPKENTPVRSTSKNHYTPVRTAKQTPGDRQYNHPILSSATQTPTHEKPRMNNILTSATEPYDLSFSRSYQNLAHLPPSYESAVKTNPSKYSSLKRLTDKEADEYYMRRRHLPDLAARGTLPLNVIQMSQQKPLPRERPRRPIRAMSQDRVLSPRRGLPDEFGMPYDRILSDEQLLSTERLHSQDPLLSPERTAFPEQSLSRAISHTDVFVSTPVLDRYRMTKMHSHPSASNNSYATLGQSQTAAKRHAFASRRHNTVEQLHYIPGHHTCYTASKTEVTV.

The N-terminal stretch at methionine 1 to alanine 30 is a signal peptide. The Extracellular segment spans residues alanine 31–threonine 180. 2 N-linked (GlcNAc...) asparagine glycosylation sites follow: asparagine 37 and asparagine 62. A helical membrane pass occupies residues asparagine 181–alanine 201. At lysine 202–valine 525 the chain is on the cytoplasmic side. The segment at isoleucine 241–proline 294 is disordered. The segment covering alanine 243 to histidine 261 has biased composition (polar residues). Residues serine 416, serine 422, and serine 434 each carry the phosphoserine modification. Threonine 458 is subject to Phosphothreonine. A disordered region spans residues methionine 469–phenylalanine 495. A compositionally biased stretch (polar residues) spans proline 473–alanine 489. Threonine 502 bears the Phosphothreonine mark. Positions glutamate 522–valine 525 match the PDZ-binding motif.

Belongs to the shisa family. In terms of assembly, component of the postsynaptic hippocampal AMPA-type glutamate receptor (AMPAR) complex, at least composed of pore forming AMPAR subunits GRIA1, GRIA2 and GRIA3 and AMPAR auxiliary proteins SHISA6 and SHISA7. Interacts (via PDZ-binding motif) with DLG4/PSD-95 (via PDZ domain); the interaction is direct. Post-translationally, N-glycosylated. Highly expressed in cerebellum and hippocampal neurons: CA1 stratum oriens and stratum radiatum, CA3 stratum oriens and stratum lucidum, and the dentate gyrus polymorphic layer. Expressed in other brain structures including olfactory bulb, cortex, amygdala and midbrain (at protein level). Also expressed in a subset of spermatogonial stem cells. Also expressed in eye, heart, kidney, lung, muscle and spleen. Isoform 2: Specifically expressed in hippocampus.

Its subcellular location is the postsynaptic density membrane. Its function is as follows. Involved in maintenance of high-frequency synaptic transmission at hippocampal CA3-CA1 synapses. Regulates AMPA-type glutamate receptor (AMPAR) immobilization at postsynaptic density keeping the channels in an activated state in the presence of glutamate and preventing synaptic depression. May play a role in self-renewal and differentiation of spermatogonial stem cells by inhibiting canonical Wnt signaling pathway. This is Protein shisa-6 from Mus musculus (Mouse).